The sequence spans 786 residues: Endonuclease MutS2 (786 aa).

Position 335 to 342 (335 to 342 (GPNTGGKT)) interacts with ATP. The segment at 529-549 (SQKNAERERKEAEEHRKQSEK) is disordered. The Smr domain occupies 711–786 (LDLRGERYED…GLGVTVVELK (76 aa)).

It belongs to the DNA mismatch repair MutS family. MutS2 subfamily. Homodimer. Binds to stalled ribosomes, contacting rRNA.

Its function is as follows. Endonuclease that is involved in the suppression of homologous recombination and thus may have a key role in the control of bacterial genetic diversity. In terms of biological role, acts as a ribosome collision sensor, splitting the ribosome into its 2 subunits. Detects stalled/collided 70S ribosomes which it binds and splits by an ATP-hydrolysis driven conformational change. Acts upstream of the ribosome quality control system (RQC), a ribosome-associated complex that mediates the extraction of incompletely synthesized nascent chains from stalled ribosomes and their subsequent degradation. Probably generates substrates for RQC. In Bacillus mycoides (strain KBAB4) (Bacillus weihenstephanensis), this protein is Endonuclease MutS2.